The sequence spans 24 residues: Caerin-2.1 (24 aa).

The protein belongs to the frog skin active peptide (FSAP) family. Caerin subfamily. In terms of tissue distribution, expressed by the skin dorsal glands.

It localises to the secreted. Functionally, inhibits the formation of NO by neuronal nitric oxide synthase. The polypeptide is Caerin-2.1 (Litoria rothii (Roth's tree frog)).